Here is a 318-residue protein sequence, read N- to C-terminus: Phosphate acetyltransferase (318 aa).

The protein belongs to the phosphate acetyltransferase and butyryltransferase family.

The protein resides in the cytoplasm. The enzyme catalyses acetyl-CoA + phosphate = acetyl phosphate + CoA. Its pathway is metabolic intermediate biosynthesis; acetyl-CoA biosynthesis; acetyl-CoA from acetate: step 2/2. The chain is Phosphate acetyltransferase (pta) from Paracoccus denitrificans.